We begin with the raw amino-acid sequence, 708 residues long: Leukotoxin translocation ATP-binding protein LktB (708 aa).

Positions 1–126 constitute a Peptidase C39 domain; sequence MEANHQRNDL…ACYQGQLILV (126 aa). The region spanning 155–437 is the ABC transmembrane type-1 domain; that stretch reads FLETLIVSIF…LAQLWQDFQQ (283 aa). 5 helical membrane passes run 159–179, 192–212, 270–290, 296–316, and 389–409; these read LIVSIFLQIFALITPLFFQVV, LNIITVALAIVIIFEIVLSGL, ALTSVLDLLFSFIFFAVMWYY, LVILGSLPCYILWSIFISPIL, and VMVINLWLGAHLVISGDLSIG. One can recognise an ABC transporter domain in the interval 469 to 704; it reads ISFKNIRFRY…SNGLYSYLHQ (236 aa). Residue 503 to 510 coordinates ATP; sequence GRSGSGKS.

This sequence belongs to the ABC transporter superfamily. Protein-1 exporter (TC 3.A.1.109) family. In terms of assembly, homodimer.

The protein resides in the cell inner membrane. It carries out the reaction ATP + H2O + proteinSide 1 = ADP + phosphate + proteinSide 2.. Its function is as follows. Part of the ABC transporter complex LktBD involved in leukotoxin export. Transmembrane domains (TMD) form a pore in the inner membrane and the ATP-binding domain (NBD) is responsible for energy generation. This is Leukotoxin translocation ATP-binding protein LktB (lktB) from Mannheimia haemolytica (Pasteurella haemolytica).